The following is a 317-amino-acid chain: GTPase Era (317 aa).

The region spanning 17-190 is the Era-type G domain; sequence RAGFACFVGR…ADLLTPLLPE (174 aa). The segment at 25-32 is G1; that stretch reads GRPNAGKS. GTP is bound at residue 25–32; sequence GRPNAGKS. The segment at 51–55 is G2; it reads QTTRH. The interval 72–75 is G3; sequence DTPG. GTP-binding positions include 72–76 and 135–138; these read DTPGL and TKTD. Positions 135–138 are G4; that stretch reads TKTD. Residues 169–171 form a G5 region; that stretch reads VSA. In terms of domain architecture, KH type-2 spans 221 to 303; sequence VRDELPHSIA…FLDLHVKVAK (83 aa).

The protein belongs to the TRAFAC class TrmE-Era-EngA-EngB-Septin-like GTPase superfamily. Era GTPase family. Monomer.

The protein localises to the cytoplasm. The protein resides in the cell membrane. In terms of biological role, an essential GTPase that binds both GDP and GTP, with rapid nucleotide exchange. Plays a role in 16S rRNA processing and 30S ribosomal subunit biogenesis and possibly also in cell cycle regulation and energy metabolism. This is GTPase Era from Streptomyces coelicolor (strain ATCC BAA-471 / A3(2) / M145).